Consider the following 299-residue polypeptide: GTPase Era (299 aa).

Positions 5–172 (RSGFISIIGR…KDLIFAKLPE (168 aa)) constitute an Era-type G domain. Residues 13 to 20 (GRPNVGKS) form a G1 region. 13–20 (GRPNVGKS) contributes to the GTP binding site. The segment at 39-43 (QTTRN) is G2. Residues 60–63 (DTPG) are G3. Residues 60-64 (DTPGI) and 122-125 (NKMD) each bind GTP. Residues 122–125 (NKMD) are G4. The tract at residues 151–153 (VSA) is G5. Residues 203–280 (TREEIPHSVA…YLELWVKVKK (78 aa)) enclose the KH type-2 domain.

This sequence belongs to the TRAFAC class TrmE-Era-EngA-EngB-Septin-like GTPase superfamily. Era GTPase family. Monomer.

It localises to the cytoplasm. It is found in the cell membrane. Its function is as follows. An essential GTPase that binds both GDP and GTP, with rapid nucleotide exchange. Plays a role in 16S rRNA processing and 30S ribosomal subunit biogenesis and possibly also in cell cycle regulation and energy metabolism. The chain is GTPase Era from Heliobacterium modesticaldum (strain ATCC 51547 / Ice1).